The following is a 202-amino-acid chain: T-cell surface glycoprotein CD3 epsilon chain (202 aa).

The first 21 residues, 1–21 (MPSGSLWRVLGLCLLSVGAWG), serve as a signal peptide directing secretion. Topologically, residues 22–125 (QEDNEDPLEP…NCVEVDTMTA (104 aa)) are extracellular. Residues 33-107 (PQTSASARYK…TSNSLEKNYL (75 aa)) form the Ig-like domain. A disulfide bridge connects residues cysteine 54 and cysteine 96. A helical transmembrane segment spans residues 126–146 (VAIVVADVCITLGFLLLVYYW). Over 147 to 202 (SKNKKASSVTMMRGPGAGGRPRGQNKEKPPPVPNPDYEPIRKGQQDLYSGLNQRGI) the chain is Cytoplasmic. Positions 156 to 202 (TMMRGPGAGGRPRGQNKEKPPPVPNPDYEPIRKGQQDLYSGLNQRGI) are disordered. Positions 170-187 (QNKEKPPPVPNPDYEPIR) are NUMB-binding region. Residues 173 to 200 (EKPPPVPNPDYEPIRKGQQDLYSGLNQR) enclose the ITAM domain. The segment at 174–181 (KPPPVPNP) is proline-rich sequence. Tyrosine 183 and tyrosine 194 each carry phosphotyrosine. Polar residues predominate over residues 192–202 (DLYSGLNQRGI).

As to quaternary structure, the TCR-CD3 complex is composed of a CD3D/CD3E and a CD3G/CD3E heterodimers that preferentially associate with TCRalpha and TCRbeta, respectively, to form TCRalpha/CD3E/CD3G and TCRbeta/CD3G/CD3E trimers. In turn, the hexamer interacts with CD3Z homodimer to form the TCR-CD3 complex. Alternatively, TCRalpha and TCRbeta can be replaced by TCRgamma and TCRdelta. Interacts with CD6. Interacts (via Proline-rich sequence) with NCK1; the interaction is ligand dependent but independent of tyrosine kinase activation. In terms of processing, phosphorylated on Tyr residues after T-cell receptor triggering by LCK in association with CD4/CD8.

It localises to the cell membrane. Functionally, part of the TCR-CD3 complex present on T-lymphocyte cell surface that plays an essential role in adaptive immune response. When antigen presenting cells (APCs) activate T-cell receptor (TCR), TCR-mediated signals are transmitted across the cell membrane by the CD3 chains CD3D, CD3E, CD3G and CD3Z. All CD3 chains contain immunoreceptor tyrosine-based activation motifs (ITAMs) in their cytoplasmic domain. Upon TCR engagement, these motifs become phosphorylated by Src family protein tyrosine kinases LCK and FYN, resulting in the activation of downstream signaling pathways. In addition of this role of signal transduction in T-cell activation, CD3E plays an essential role in correct T-cell development. Also participates in internalization and cell surface down-regulation of TCR-CD3 complexes via endocytosis sequences present in CD3E cytosolic region. In addition to its role as a TCR coreceptor, it serves as a receptor for ITPRIPL1. Ligand recognition inhibits T-cell activation by promoting interaction with NCK1, which prevents CD3E-ZAP70 interaction and blocks the ERK-NFkB signaling cascade and calcium influx. This Felis catus (Cat) protein is T-cell surface glycoprotein CD3 epsilon chain (CD3E).